Here is a 306-residue protein sequence, read N- to C-terminus: Palmitoyl-protein thioesterase 1 (306 aa).

Positions 1–27 (MASSCSRRLLAAALLPWCCAAWALGHL) are cleaved as a signal peptide. Intrachain disulfides connect cysteine 45–cysteine 46, cysteine 96–cysteine 128, and cysteine 152–cysteine 160. Residue serine 115 is part of the active site. Asparagine 197, asparagine 212, and asparagine 232 each carry an N-linked (GlcNAc...) asparagine glycan. Residues aspartate 233 and histidine 289 contribute to the active site.

It belongs to the palmitoyl-protein thioesterase family. As to quaternary structure, interacts with CLN5, ATP5F1A and ATP5F1B. In terms of processing, glycosylated. As to expression, highest level in testis and kidney, lower in heart, brain and lung and lowest in skeletal muscle.

It is found in the lysosome. The protein resides in the secreted. Its subcellular location is the golgi apparatus. The protein localises to the endoplasmic reticulum. The enzyme catalyses S-hexadecanoyl-L-cysteinyl-[protein] + H2O = L-cysteinyl-[protein] + hexadecanoate + H(+). The catalysed reaction is hexadecanoyl-CoA + H2O = hexadecanoate + CoA + H(+). It carries out the reaction S-hexadecanoyl-N-acetylcysteamine + H2O = N-acetylcysteamine + hexadecanoate + H(+). It catalyses the reaction S-hexadecanoyl-N-acetylcysteine methyl ester + H2O = N-acetylcysteine methyl ester + hexadecanoate + H(+). In terms of biological role, has thioesterase activity against fatty acid thioesters with 14 -18 carbons, including palmitoyl-CoA, S-palmitoyl-N-acetylcysteamine, and palmitoylated proteins. In contrast to PPT2, PPT1 can hydrolyze palmitoylated proteins and palmitoylcysteine. This chain is Palmitoyl-protein thioesterase 1 (Ppt1), found in Mus musculus (Mouse).